An 896-amino-acid polypeptide reads, in one-letter code: Protein translocase subunit SecA (896 aa).

Residues Gln87, 105–109 (GEGKT), and Asp507 contribute to the ATP site. Residues 855–879 (LSENDEASETQTFRRQEKKIGRNDP) form a disordered region. Positions 866-876 (TFRRQEKKIGR) are enriched in basic and acidic residues. Zn(2+)-binding residues include Cys880, Cys882, Cys891, and His892.

This sequence belongs to the SecA family. As to quaternary structure, monomer and homodimer. Part of the essential Sec protein translocation apparatus which comprises SecA, SecYEG and auxiliary proteins SecDF-YajC and YidC. Zn(2+) is required as a cofactor.

The protein localises to the cell inner membrane. Its subcellular location is the cytoplasm. The catalysed reaction is ATP + H2O + cellular proteinSide 1 = ADP + phosphate + cellular proteinSide 2.. Functionally, part of the Sec protein translocase complex. Interacts with the SecYEG preprotein conducting channel. Has a central role in coupling the hydrolysis of ATP to the transfer of proteins into and across the cell membrane, serving both as a receptor for the preprotein-SecB complex and as an ATP-driven molecular motor driving the stepwise translocation of polypeptide chains across the membrane. This is Protein translocase subunit SecA from Legionella pneumophila (strain Lens).